Reading from the N-terminus, the 858-residue chain is Heat shock protein 105 kDa (858 aa).

N-acetylserine is present on serine 2. At lysine 471 the chain carries N6-acetyllysine. 2 disordered regions span residues 500–584 (KVPT…PPEA) and 796–858 (CEPV…MDLD). A compositionally biased stretch (acidic residues) spans 504-514 (EENEMSSEADM). A phosphoserine mark is found at serine 509 and serine 510. Positions 532–554 (QQDNSEAGTQPQVQTDAQQTSQS) are enriched in polar residues. Position 557 is a phosphoserine (serine 557). Position 561 is a phosphothreonine (threonine 561). Basic and acidic residues-rich tracts occupy residues 563–584 (EENK…PPEA) and 805–814 (PKIESPKLER). At serine 809 the chain carries Phosphoserine. The residue at position 815 (threonine 815) is a Phosphothreonine. A compositionally biased stretch (basic and acidic residues) spans 821–832 (IDKKEEDLEDKN). The segment covering 849 to 858 (EKNSVNMDLD) has biased composition (polar residues).

It belongs to the heat shock protein 70 family. Interacts with HSPA8/HSC70. Interacts with HSPA1A (via NBD) and HSPA1B (via NBD). Post-translationally, phosphorylation on Ser-509 may be important for regulation of the HSPA8/HSC70 chaperone activity. In terms of tissue distribution, highly expressed in testis. Present at lower levels in most brain regions, except cerebellum. Overexpressed in cancer cells.

It localises to the cytoplasm. Its function is as follows. Acts as a nucleotide-exchange factor (NEF) for chaperone proteins HSPA1A and HSPA1B, promoting the release of ADP from HSPA1A/B thereby triggering client/substrate protein release. Prevents the aggregation of denatured proteins in cells under severe stress, on which the ATP levels decrease markedly. Inhibits HSPA8/HSC70 ATPase and chaperone activities. The protein is Heat shock protein 105 kDa (HSPH1) of Homo sapiens (Human).